A 591-amino-acid chain; its full sequence is L-fucose isomerase (591 aa).

Catalysis depends on proton acceptor residues Glu337 and Asp361. Glu337, Asp361, and His528 together coordinate Mn(2+).

Belongs to the L-fucose isomerase family. In terms of assembly, homohexamer. It depends on Mn(2+) as a cofactor.

It localises to the cytoplasm. The enzyme catalyses L-fucose = L-fuculose. The catalysed reaction is D-arabinose = D-ribulose. It catalyses the reaction L-xylopyranose = L-xylulose. The protein operates within carbohydrate degradation; L-fucose degradation; L-lactaldehyde and glycerone phosphate from L-fucose: step 1/3. Its activity is regulated as follows. Inhibited by ribitol, L-arabitol and dulcitol. Isomerization of L-xylulose to L-xylose is inhibited by xylitol. Functionally, converts the aldose L-fucose into the corresponding ketose L-fuculose. Also converts D-arabinose into D-ribulose. In addition, catalyzes the isomerization of L-xylulose to L-xylose. The polypeptide is L-fucose isomerase (Escherichia coli (strain K12)).